The sequence spans 128 residues: Large ribosomal subunit protein bL12 (128 aa).

The protein belongs to the bacterial ribosomal protein bL12 family. Homodimer. Part of the ribosomal stalk of the 50S ribosomal subunit. Forms a multimeric L10(L12)X complex, where L10 forms an elongated spine to which 2 to 4 L12 dimers bind in a sequential fashion. Binds GTP-bound translation factors.

Forms part of the ribosomal stalk which helps the ribosome interact with GTP-bound translation factors. Is thus essential for accurate translation. The sequence is that of Large ribosomal subunit protein bL12 from Desulfovibrio desulfuricans (strain ATCC 27774 / DSM 6949 / MB).